A 211-amino-acid polypeptide reads, in one-letter code: ATP phosphoribosyltransferase (211 aa).

This sequence belongs to the ATP phosphoribosyltransferase family. Short subfamily. As to quaternary structure, heteromultimer composed of HisG and HisZ subunits.

It localises to the cytoplasm. The enzyme catalyses 1-(5-phospho-beta-D-ribosyl)-ATP + diphosphate = 5-phospho-alpha-D-ribose 1-diphosphate + ATP. Its pathway is amino-acid biosynthesis; L-histidine biosynthesis; L-histidine from 5-phospho-alpha-D-ribose 1-diphosphate: step 1/9. In terms of biological role, catalyzes the condensation of ATP and 5-phosphoribose 1-diphosphate to form N'-(5'-phosphoribosyl)-ATP (PR-ATP). Has a crucial role in the pathway because the rate of histidine biosynthesis seems to be controlled primarily by regulation of HisG enzymatic activity. This chain is ATP phosphoribosyltransferase, found in Bacillus cereus (strain B4264).